We begin with the raw amino-acid sequence, 149 residues long: Transcriptional repressor NrdR (149 aa).

Residues cysteine 3–cysteine 34 fold into a zinc finger. Residues proline 49–glutamate 139 enclose the ATP-cone domain.

It belongs to the NrdR family. It depends on Zn(2+) as a cofactor.

Negatively regulates transcription of bacterial ribonucleotide reductase nrd genes and operons by binding to NrdR-boxes. The chain is Transcriptional repressor NrdR from Cronobacter sakazakii (strain ATCC BAA-894) (Enterobacter sakazakii).